The following is a 212-amino-acid chain: MKINSNTIIIGKKVILVPYKKKHVEKYWKWMQSEEIREQTASEELTIEEEFENQESWFKDDHKITFIILDKDLLLENEKDSNGYSNENDIKSMIGDVNIFFNQYEDEGTAELEVMIAEPTSRRKGLAREAISIIMGYGIEHLSTITKKYIVKIGESNQPSIQMFKSMNFKQIGSVNVFKEILLEFENGENNINLLNLKNNDNYKSLIFKNWE.

The N-acetyltransferase domain maps to 34–201 (EEIREQTASE…INLLNLKNND (168 aa)).

This sequence belongs to the acetyltransferase family. GNAT subfamily.

This Dictyostelium discoideum (Social amoeba) protein is N-acetyltransferase 9-like protein (nat9).